Consider the following 307-residue polypeptide: Pantothenate kinase (307 aa).

Residue glycine 90 to serine 97 participates in ATP binding.

The protein belongs to the prokaryotic pantothenate kinase family.

Its subcellular location is the cytoplasm. The catalysed reaction is (R)-pantothenate + ATP = (R)-4'-phosphopantothenate + ADP + H(+). It participates in cofactor biosynthesis; coenzyme A biosynthesis; CoA from (R)-pantothenate: step 1/5. The polypeptide is Pantothenate kinase (Enterococcus faecalis (strain ATCC 700802 / V583)).